Reading from the N-terminus, the 554-residue chain is Glucose-6-phosphate isomerase 2 (554 aa).

E359 acts as the Proton donor in catalysis. Active-site residues include H390 and K518.

This sequence belongs to the GPI family.

It is found in the cytoplasm. The catalysed reaction is alpha-D-glucose 6-phosphate = beta-D-fructose 6-phosphate. The protein operates within carbohydrate biosynthesis; gluconeogenesis. Its pathway is carbohydrate degradation; glycolysis; D-glyceraldehyde 3-phosphate and glycerone phosphate from D-glucose: step 2/4. Catalyzes the reversible isomerization of glucose-6-phosphate to fructose-6-phosphate. The sequence is that of Glucose-6-phosphate isomerase 2 from Pseudomonas putida (strain ATCC 47054 / DSM 6125 / CFBP 8728 / NCIMB 11950 / KT2440).